Reading from the N-terminus, the 662-residue chain is Protein transport Sec1b (662 aa).

The protein belongs to the STXBP/unc-18/SEC1 family.

Functionally, involved in the vesicle trafficking. Binds syntaxins. In Arabidopsis thaliana (Mouse-ear cress), this protein is Protein transport Sec1b (SEC1B).